The primary structure comprises 594 residues: Estrogen receptor (594 aa).

Positions 1 to 184 (MTMTLHTKAS…AMESAKETRY (184 aa)) are modulating (transactivation AF-1); mediates interaction with MACROD1. O-linked (GlcNAc) serine glycosylation occurs at S10. Residues 35-47 (LERPLGEVYVESS) form a required for interaction with NCOA1 region. The interaction with DDX5; self-association stretch occupies residues 35 to 174 (LERPLGEVYV…LASSGDKGSM (140 aa)). Phosphoserine; by CDK2 occurs at positions 104 and 106. Phosphoserine is present on S118. The tract at residues 152-173 (PNADNRRQGGRERLASSGDKGS) is disordered. The segment covering 154–165 (ADNRRQGGRERL) has biased composition (basic and acidic residues). S167 is modified (phosphoserine; by CK2). 2 consecutive NR C4-type zinc fingers follow at residues 185–205 (CAVCNDYASGYHYGVWSCEGC) and 221–245 (CPATNQCTIDKNRRKSCQACRLRKC). The nuclear receptor DNA-binding region spans 185–250 (CAVCNDYASG…RLRKCYEVGM (66 aa)). A mediates interaction with DNTTIP2 region spans residues 185-310 (CAVCNDYASG…TKKISPVLSL (126 aa)). The segment at 251–310 (MKGGIRKDRRGGRMLKHKRQRDDGEGRNEAGPSGDRRPANFWPSPLLIKHTKKISPVLSL) is hinge. Residues 257–269 (KDRRGGRMLKHKR) show a composition bias toward basic residues. The interval 257 to 293 (KDRRGGRMLKHKRQRDDGEGRNEAGPSGDRRPANFWP) is disordered. R260 is subject to Asymmetric dimethylarginine; by PRMT1. Residues 262-594 (GRMLKHKRQR…GEAEGFPNTI (333 aa)) form an interaction with AKAP13 region. The interval 264-594 (MLKHKRQRDD…GEAEGFPNTI (331 aa)) is self-association. The span at 270 to 288 (QRDDGEGRNEAGPSGDRRP) shows a compositional bias: basic and acidic residues. The NR LBD domain maps to 311–546 (TAEQMISALL…DLLLEMLDAH (236 aa)). A transactivation AF-2 region spans residues 311–594 (TAEQMISALL…GEAEGFPNTI (284 aa)). Residues E353 and R394 each coordinate 17beta-estradiol. C447 is lipidated: S-palmitoyl cysteine. H523 contacts 17beta-estradiol. The residue at position 536 (Y536) is a Phosphotyrosine; by Tyr-kinases. The disordered stretch occupies residues 551 to 575 (PANHGGAPMEETNQSQLATTGSTSP). The segment covering 561–575 (ETNQSQLATTGSTSP) has biased composition (polar residues). Residue T570 is glycosylated (O-linked (GlcNAc) threonine).

This sequence belongs to the nuclear hormone receptor family. NR3 subfamily. Binds DNA as a homodimer. Can form a heterodimer with ESR2. Interacts with coactivator NCOA5. Interacts with PELP1, the interaction is enhanced by 17-beta-estradiol; the interaction increases ESR1 transcriptional activity. Interacts with NCOA7; the interaction is ligand-inducible. Interacts with AKAP13, CUEDC2, HEXIM1, KDM5A, MAP1S, SMARD1, and UBE1C. Interacts with MUC1; the interaction is stimulated by 7 beta-estradiol (E2) and enhances ESR1-mediated transcription. Interacts with DNTTIP2, and UIMC1. Interacts with KMT2D/MLL2. Interacts with ATAD2; the interaction is enhanced by estradiol. Interacts with KIF18A and LDB1. Interacts with RLIM (via its C-terminus). Interacts with MACROD1. Interacts with SH2D4A and PLCG. Interacts with SH2D4A; the interaction blocks binding to PLCG and inhibits estrogen-induced cell proliferation. Interacts with DYNLL1. Interacts with CCDC62; the interaction requires estradiol and appears to enhance the transcription of target genes. Interacts with NR2C1; the interaction prevents homodimerization of ESR1 and suppresses its transcriptional activity and cell growth. Interacts with DNAAF4. Interacts with PRMT2. Interacts with RBFOX2. Interacts with EP300; the interaction is estrogen-dependent and enhanced by CITED1. Interacts with CITED1; the interaction is estrogen-dependent. Interacts with FAM120B, FOXL2, PHB2 and SLC30A9. Interacts with coactivators NCOA3 and NCOA6. Interacts with STK3/MST2 only in the presence of SAV1 and vice-versa. Binds to CSNK1D. Interacts with NCOA2; NCOA2 can interact with ESR1 AF-1 and AF-2 domains simultaneously and mediate their transcriptional synergy. Interacts with DDX5. Interacts with NCOA1; the interaction seems to require a self-association of N-terminal and C-terminal regions. Interacts with ZNF366, DDX17, NFKB1, RELA, SP1 and SP3. Interacts with NRIP1. Interacts with GPER1; the interaction occurs in an estrogen-dependent manner. Interacts with CLOCK and the interaction is stimulated by estrogen. Interacts with TRIP4 (ufmylated); estrogen dependent. Interacts with LMTK3; the interaction phosphorylates ESR1 (in vitro) and protects it against proteasomal degradation. Interacts with CCAR2 (via N-terminus) in a ligand-independent manner. Interacts with ZFHX3. Interacts with SFR1 in a ligand-dependent and -independent manner. Interacts with DCAF13, LATS1 and DCAF1; regulates ESR1 ubiquitination and ubiquitin-mediated proteasomal degradation. Interacts (via DNA-binding domain) with POU4F2 (C-terminus); this interaction increases the estrogen receptor ESR1 transcriptional activity in a DNA- and ligand 17-beta-estradiol-independent manner. Interacts with ESRRB isoform 1. Interacts with UBE3A and WBP2. Interacts with GTF2B. Interacts with RBM39. In the absence of hormonal ligand, interacts with TACC1. Interacts with PI3KR1 or PI3KR2 and PTK2/FAK1. Interacts with SRC. Interacts with BAG1; the interaction is promoted in the absence of estradiol (17-beta-estradiol/E2). Interacts with and ubiquitinated by STUB1; the interaction is promoted in the absence of estradiol (17-beta-estradiol/E2). Interacts with NEDD8. Post-translationally, ubiquitinated; regulated by LATS1 via DCAF1 it leads to ESR1 proteasomal degradation. Deubiquitinated by OTUB1. Ubiquitinated by STUB1/CHIP; in the CA1 hippocampal region following loss of endogenous circulating estradiol (17-beta-estradiol/E2). Ubiquitinated by UBR5, leading to its degradation: UBR5 specifically recognizes and binds ligand-bound ESR1 when it is not associated with coactivators (NCOAs). In presence of NCOAs, the UBR5-degron is not accessible, preventing its ubiquitination and degradation. Phosphorylated by cyclin A/CDK2 and CK1. Phosphorylation probably enhances transcriptional activity. Dephosphorylation at Ser-118 by PPP5C inhibits its transactivation activity. Phosphorylated by LMTK3 (in vitro). In terms of processing, palmitoylated at Cys-447 by ZDHHC7 and ZDHHC21. Palmitoylation is required for plasma membrane targeting and for rapid intracellular signaling via ERK and AKT kinases and cAMP generation, but not for signaling mediated by the nuclear hormone receptor. Post-translationally, dimethylated by PRMT1 at Arg-260. The methylation may favor cytoplasmic localization. Demethylated by JMJD6 at Arg-260.

It localises to the nucleus. It is found in the cytoplasm. Its subcellular location is the golgi apparatus. The protein localises to the cell membrane. In terms of biological role, nuclear hormone receptor. The steroid hormones and their receptors are involved in the regulation of eukaryotic gene expression and affect cellular proliferation and differentiation in target tissues. Ligand-dependent nuclear transactivation involves either direct homodimer binding to a palindromic estrogen response element (ERE) sequence or association with other DNA-binding transcription factors, such as AP-1/c-Jun, c-Fos, ATF-2, Sp1 and Sp3, to mediate ERE-independent signaling. Ligand binding induces a conformational change allowing subsequent or combinatorial association with multiprotein coactivator complexes through LXXLL motifs of their respective components. Mutual transrepression occurs between the estrogen receptor (ER) and NF-kappa-B in a cell-type specific manner. Decreases NF-kappa-B DNA-binding activity and inhibits NF-kappa-B-mediated transcription from the IL6 promoter and displace RELA/p65 and associated coregulators from the promoter. Recruited to the NF-kappa-B response element of the CCL2 and IL8 promoters and can displace CREBBP. Present with NF-kappa-B components RELA/p65 and NFKB1/p50 on ERE sequences. Can also act synergistically with NF-kappa-B to activate transcription involving respective recruitment adjacent response elements; the function involves CREBBP. Can activate the transcriptional activity of TFF1. Also mediates membrane-initiated estrogen signaling involving various kinase cascades. Essential for MTA1-mediated transcriptional regulation of BRCA1 and BCAS3. Maintains neuronal survival in response to ischemic reperfusion injury when in the presence of circulating estradiol (17-beta-estradiol/E2). The polypeptide is Estrogen receptor (ESR1) (Equus caballus (Horse)).